A 187-amino-acid chain; its full sequence is UPF0301 protein YqgE (187 aa).

It belongs to the UPF0301 (AlgH) family.

The chain is UPF0301 protein YqgE from Salmonella choleraesuis (strain SC-B67).